A 256-amino-acid chain; its full sequence is H-2 class II histocompatibility antigen, A-D alpha chain (256 aa).

Residues 1–23 form the signal peptide; sequence MPCSRALILGVLALNTMLSLCGG. Residues 24–111 form an alpha-1 region; the sequence is EDDIEADHVG…KRSNFTPATN (88 aa). At 24-218 the chain is on the extracellular side; that stretch reads EDDIEADHVG…IPAPMSELTE (195 aa). The interval 112–205 is alpha-2; it reads EAPQATVFPK…GLEEPVLKHW (94 aa). The region spanning 114–206 is the Ig-like C1-type domain; that stretch reads PQATVFPKSP…LEEPVLKHWE (93 aa). A disulfide bond links Cys134 and Cys190. Asn145 carries N-linked (GlcNAc...) asparagine glycosylation. Positions 206–218 are connecting peptide; the sequence is EPEIPAPMSELTE. The helical transmembrane segment at 219-244 threads the bilayer; it reads TVVCALGLSVGLVGIVVGTIFIIQGL. The Cytoplasmic portion of the chain corresponds to 245–256; sequence RSGGTSRHPGPL.

It belongs to the MHC class II family.

Its subcellular location is the membrane. This is H-2 class II histocompatibility antigen, A-D alpha chain (H2-Aa) from Mus musculus (Mouse).